We begin with the raw amino-acid sequence, 579 residues long: Adenine deaminase (579 aa).

Belongs to the metallo-dependent hydrolases superfamily. Adenine deaminase family. Mn(2+) is required as a cofactor.

It carries out the reaction adenine + H2O + H(+) = hypoxanthine + NH4(+). The protein is Adenine deaminase of Listeria welshimeri serovar 6b (strain ATCC 35897 / DSM 20650 / CCUG 15529 / CIP 8149 / NCTC 11857 / SLCC 5334 / V8).